Here is a 244-residue protein sequence, read N- to C-terminus: THO complex subunit 4A (244 aa).

The disordered stretch occupies residues 1–82 (MSTGLDMSLD…EDHRSGRSSA (82 aa)). Ser2 carries the N-acetylserine modification. Residues 21 to 35 (GGAGPARGTGSGSGP) show a composition bias toward gly residues. A compositionally biased stretch (basic and acidic residues) spans 67-77 (MFSDRSEDHRS). The RRM domain maps to 88-165 (TKLYISNLDY…KPMKIEIVGT (78 aa)). Residues 169 to 244 (TAAAPSGRPA…KYHSGDMETN (76 aa)) are disordered. The segment covering 187-211 (WRGGQGRGGQQRGGGRGGGGRGGGG) has biased composition (gly residues). Residues 220 to 244 (PAEKISAEDLDADLDKYHSGDMETN) are compositionally biased toward basic and acidic residues.

This sequence belongs to the ALYREF family.

It localises to the nucleus. Its subcellular location is the nucleoplasm. It is found in the nucleolus. Functionally, export adapter involved in nuclear export of spliced and unspliced mRNA. This chain is THO complex subunit 4A (ALY1), found in Arabidopsis thaliana (Mouse-ear cress).